The primary structure comprises 342 residues: S-methyl-5'-thioadenosine phosphorylase (342 aa).

Residues Thr51, 99–100 (RH), and 132–133 (SA) contribute to the phosphate site. Residue Met234 coordinates substrate. Phosphate is bound at residue Ser235. Substrate is bound at residue 258-260 (DYD).

The protein belongs to the PNP/MTAP phosphorylase family. MTAP subfamily. In terms of assembly, homotrimer.

It is found in the cytoplasm. It localises to the nucleus. It carries out the reaction S-methyl-5'-thioadenosine + phosphate = 5-(methylsulfanyl)-alpha-D-ribose 1-phosphate + adenine. The protein operates within amino-acid biosynthesis; L-methionine biosynthesis via salvage pathway; S-methyl-5-thio-alpha-D-ribose 1-phosphate from S-methyl-5'-thioadenosine (phosphorylase route): step 1/1. Functionally, catalyzes the reversible phosphorylation of S-methyl-5'-thioadenosine (MTA) to adenine and 5-methylthioribose-1-phosphate. Involved in the breakdown of MTA, a major by-product of polyamine biosynthesis. Responsible for the first step in the methionine salvage pathway after MTA has been generated from S-adenosylmethionine. Has broad substrate specificity with 6-aminopurine nucleosides as preferred substrates. The sequence is that of S-methyl-5'-thioadenosine phosphorylase from Aspergillus fumigatus (strain ATCC MYA-4609 / CBS 101355 / FGSC A1100 / Af293) (Neosartorya fumigata).